The sequence spans 323 residues: Beta-ketoacyl-[acyl-carrier-protein] synthase III (323 aa).

Catalysis depends on residues cysteine 113 and histidine 250. The ACP-binding stretch occupies residues 251–255 (QANKR). The active site involves asparagine 280.

The protein belongs to the thiolase-like superfamily. FabH family. In terms of assembly, homodimer.

It is found in the cytoplasm. The enzyme catalyses malonyl-[ACP] + acetyl-CoA + H(+) = 3-oxobutanoyl-[ACP] + CO2 + CoA. It participates in lipid metabolism; fatty acid biosynthesis. In terms of biological role, catalyzes the condensation reaction of fatty acid synthesis by the addition to an acyl acceptor of two carbons from malonyl-ACP. Catalyzes the first condensation reaction which initiates fatty acid synthesis and may therefore play a role in governing the total rate of fatty acid production. Possesses both acetoacetyl-ACP synthase and acetyl transacylase activities. Its substrate specificity determines the biosynthesis of branched-chain and/or straight-chain of fatty acids. In Brucella melitensis biotype 2 (strain ATCC 23457), this protein is Beta-ketoacyl-[acyl-carrier-protein] synthase III.